A 403-amino-acid polypeptide reads, in one-letter code: MENKSEMINATTIEFKTSSAEGSVDFVNVFDLEKMAQKVIPKGAFGYIASGAGDTFTLHENIRSFNHKLIPHGLKGVENPSTEITFIGDKLASPIILAPVAAHKLANEQGEIASAKGVKEFGTIYTTSSYSTTDLPEISQTLGDSPHWFQFYYSKDDGINRHIMDRLKAEGVKSIVLTVDATVGGNREVDKRNGFVFPVGMPIVQEYLPNGAGKTMDYVYKATKQALSPKDVEYIAQYSGLPVYVKGPQCAEDAFRALEAGASGIWVTNHGGRQLDGGPAAFDSLQEVAESVDRRVPIVFDSGVRRGQHVFKALASGADLVALGRPVIYGLAMGGSVGTRQVFEKINDELKMVMQLAGTQTIDDVKHFKLRHNPYDSSIPFSPKCFKIRLIFRRPNQILGQFF.

The FMN hydroxy acid dehydrogenase domain maps to 21 to 375 (EGSVDFVNVF…KHFKLRHNPY (355 aa)). A pyruvate-binding site is contributed by Tyr-47. Residues 99–101 (PVA), Ser-128, and Gln-150 contribute to the FMN site. Tyr-152 lines the pyruvate pocket. Thr-178 is a binding site for FMN. Residues Arg-187 and Tyr-220 each contribute to the pyruvate site. Residue Lys-246 coordinates FMN. Pyruvate-binding residues include His-270 and Arg-273. His-270 functions as the Proton acceptor in the catalytic mechanism. FMN is bound by residues 301–305 (DSGVR) and Arg-325.

Belongs to the FMN-dependent alpha-hydroxy acid dehydrogenase family. In terms of assembly, homotetramer. The cofactor is FMN.

The enzyme catalyses (S)-lactate + O2 = pyruvate + H2O2. Its function is as follows. Catalyzes the oxidation of (S)-lactate (L-lactate) to pyruvate, with a reduction of O2 to H2O2. Is likely involved in the L-lactate aerobic metabolism of S.iniae that enables the bacterium to utilize L-lactate as an energy source for growth under aerobic conditions in the absence (or at low concentrations) of glucose. The chain is L-lactate oxidase from Streptococcus iniae (Streptococcus shiloi).